Reading from the N-terminus, the 264-residue chain is MNQVTESAVQFDVITLFPEMFRALTDWGITSRAVKQGRFGLRTWNPRDFTTDNYRTVDDRPYGGGPGMVMLARPLEAAIDAAKAAQAEQGIASTRVVMMSPQGAPLTHDRAVRMAQEPGVVVLCGRYEAIDQRLLDRCVDEEISLGDFVLSGGELPAMAMMDAVVRLLPGVLNDSLSAVQDSFADGLLDCPHYTRPEEYDGVRVPDVLLGGHHAEIEKWRRQEALRNTLRKRPDLIVRARREKLLSRADEAWLANLAREAKDAS.

S-adenosyl-L-methionine is bound by residues Gly125 and 145–150 (LGDFVL).

The protein belongs to the RNA methyltransferase TrmD family. Homodimer.

The protein localises to the cytoplasm. The catalysed reaction is guanosine(37) in tRNA + S-adenosyl-L-methionine = N(1)-methylguanosine(37) in tRNA + S-adenosyl-L-homocysteine + H(+). Its function is as follows. Specifically methylates guanosine-37 in various tRNAs. In Burkholderia cenocepacia (strain ATCC BAA-245 / DSM 16553 / LMG 16656 / NCTC 13227 / J2315 / CF5610) (Burkholderia cepacia (strain J2315)), this protein is tRNA (guanine-N(1)-)-methyltransferase.